A 332-amino-acid polypeptide reads, in one-letter code: Anthranilate phosphoribosyltransferase (332 aa).

Residues Gly-79, 82 to 83 (GD), Ser-87, 89 to 92 (NIST), 107 to 115 (KHGNRSVSS), and Ser-119 contribute to the 5-phospho-alpha-D-ribose 1-diphosphate site. An anthranilate-binding site is contributed by Gly-79. Ser-91 is a Mg(2+) binding site. Residue Asn-110 participates in anthranilate binding. Residue Arg-165 participates in anthranilate binding. Residues Asp-223 and Glu-224 each contribute to the Mg(2+) site.

This sequence belongs to the anthranilate phosphoribosyltransferase family. As to quaternary structure, homodimer. It depends on Mg(2+) as a cofactor.

It carries out the reaction N-(5-phospho-beta-D-ribosyl)anthranilate + diphosphate = 5-phospho-alpha-D-ribose 1-diphosphate + anthranilate. It functions in the pathway amino-acid biosynthesis; L-tryptophan biosynthesis; L-tryptophan from chorismate: step 2/5. Functionally, catalyzes the transfer of the phosphoribosyl group of 5-phosphorylribose-1-pyrophosphate (PRPP) to anthranilate to yield N-(5'-phosphoribosyl)-anthranilate (PRA). The chain is Anthranilate phosphoribosyltransferase from Serratia proteamaculans (strain 568).